We begin with the raw amino-acid sequence, 307 residues long: Protoheme IX farnesyltransferase (307 aa).

A run of 8 helical transmembrane segments spans residues 32–52, 65–85, 108–128, 131–151, 158–178, 186–206, 251–271, and 287–307; these read MGIV…ALHF, FFTI…NNYI, PGFA…FLLL, PMAV…YSLW, LNTV…WAAI, IAWM…LALA, LGIT…VLGF, and FVYS…VTFF.

This sequence belongs to the UbiA prenyltransferase family. Protoheme IX farnesyltransferase subfamily. Interacts with CtaA.

The protein resides in the cell membrane. The catalysed reaction is heme b + (2E,6E)-farnesyl diphosphate + H2O = Fe(II)-heme o + diphosphate. It functions in the pathway porphyrin-containing compound metabolism; heme O biosynthesis; heme O from protoheme: step 1/1. Converts heme B (protoheme IX) to heme O by substitution of the vinyl group on carbon 2 of heme B porphyrin ring with a hydroxyethyl farnesyl side group. The polypeptide is Protoheme IX farnesyltransferase (Bacillus cereus (strain G9842)).